The sequence spans 538 residues: Importin subunit alpha-4 (538 aa).

An IBB domain is found at 1-58 (MSLRPSTRAELRKKIYKTGVDADEARRRREDNLVEIRKNKREDSLLKKRREGMMLQQQ). ARM repeat units follow at residues 112–152 (SPPI…NVAS), 155–194 (SDHT…NVAG), 197–237 (PNCR…NFCR), 239–278 (KPPT…YLSD), 281–320 (NDKI…NIVT), 323–363 (DSQT…NITA), 366–405 (KLQI…NATS), and 409–448 (HEQI…NILK).

The protein belongs to the importin alpha family. In terms of assembly, forms a complex with importin subunit beta-1. Interacts with A.tumefaciens VirD2 and VirE2.

The protein localises to the nucleus envelope. In terms of biological role, binds to conventional NLS motifs and mediates nuclear protein import across the nuclear envelope. Acts as a cellular receptor for the nuclear import of the virD2 protein of Agrobacterium and is essential for Agrobacterium-mediated root transformation. The chain is Importin subunit alpha-4 from Arabidopsis thaliana (Mouse-ear cress).